The chain runs to 364 residues: Probable dual-specificity RNA methyltransferase RlmN (364 aa).

Glutamate 107 functions as the Proton acceptor in the catalytic mechanism. A Radical SAM core domain is found at 113 to 346 (HDYGNSVCVT…ATIRREQGSD (234 aa)). A disulfide bridge links cysteine 120 with cysteine 351. [4Fe-4S] cluster contacts are provided by cysteine 127, cysteine 131, and cysteine 134. S-adenosyl-L-methionine-binding positions include 177–178 (GE), serine 209, 232–234 (SLH), and asparagine 308. The active-site S-methylcysteine intermediate is the cysteine 351.

Belongs to the radical SAM superfamily. RlmN family. [4Fe-4S] cluster is required as a cofactor.

Its subcellular location is the cytoplasm. It catalyses the reaction adenosine(2503) in 23S rRNA + 2 reduced [2Fe-2S]-[ferredoxin] + 2 S-adenosyl-L-methionine = 2-methyladenosine(2503) in 23S rRNA + 5'-deoxyadenosine + L-methionine + 2 oxidized [2Fe-2S]-[ferredoxin] + S-adenosyl-L-homocysteine. The catalysed reaction is adenosine(37) in tRNA + 2 reduced [2Fe-2S]-[ferredoxin] + 2 S-adenosyl-L-methionine = 2-methyladenosine(37) in tRNA + 5'-deoxyadenosine + L-methionine + 2 oxidized [2Fe-2S]-[ferredoxin] + S-adenosyl-L-homocysteine. In terms of biological role, specifically methylates position 2 of adenine 2503 in 23S rRNA and position 2 of adenine 37 in tRNAs. Confers resistance to some classes of antibiotics. This is Probable dual-specificity RNA methyltransferase RlmN from Staphylococcus haemolyticus (strain JCSC1435).